The sequence spans 252 residues: Glucosamine-6-phosphate deaminase (252 aa).

Catalysis depends on aspartate 64, which acts as the Proton acceptor; for enolization step. Catalysis depends on asparagine 130, which acts as the For ring-opening step. The Proton acceptor; for ring-opening step role is filled by histidine 132. Glutamate 137 (for ring-opening step) is an active-site residue.

The protein belongs to the glucosamine/galactosamine-6-phosphate isomerase family. NagB subfamily.

It carries out the reaction alpha-D-glucosamine 6-phosphate + H2O = beta-D-fructose 6-phosphate + NH4(+). It participates in amino-sugar metabolism; N-acetylneuraminate degradation; D-fructose 6-phosphate from N-acetylneuraminate: step 5/5. Catalyzes the reversible isomerization-deamination of glucosamine 6-phosphate (GlcN6P) to form fructose 6-phosphate (Fru6P) and ammonium ion. In Exiguobacterium sibiricum (strain DSM 17290 / CCUG 55495 / CIP 109462 / JCM 13490 / 255-15), this protein is Glucosamine-6-phosphate deaminase.